Reading from the N-terminus, the 314-residue chain is Methionyl-tRNA formyltransferase (314 aa).

Residue 110–113 participates in (6S)-5,6,7,8-tetrahydrofolate binding; that stretch reads SLLP.

The protein belongs to the Fmt family.

The enzyme catalyses L-methionyl-tRNA(fMet) + (6R)-10-formyltetrahydrofolate = N-formyl-L-methionyl-tRNA(fMet) + (6S)-5,6,7,8-tetrahydrofolate + H(+). Functionally, attaches a formyl group to the free amino group of methionyl-tRNA(fMet). The formyl group appears to play a dual role in the initiator identity of N-formylmethionyl-tRNA by promoting its recognition by IF2 and preventing the misappropriation of this tRNA by the elongation apparatus. The protein is Methionyl-tRNA formyltransferase of Levilactobacillus brevis (strain ATCC 367 / BCRC 12310 / CIP 105137 / JCM 1170 / LMG 11437 / NCIMB 947 / NCTC 947) (Lactobacillus brevis).